We begin with the raw amino-acid sequence, 72 residues long: Seed trypsin/chymotrypsin inhibitor IVB (72 aa).

Cystine bridges form between Cys-8–Cys-61, Cys-9–Cys-24, Cys-12–Cys-57, Cys-14–Cys-22, Cys-31–Cys-38, Cys-35–Cys-50, and Cys-40–Cys-48.

This sequence belongs to the Bowman-Birk serine protease inhibitor family. As to expression, seed.

Its function is as follows. Inhibitor of trypsin and of chymotrypsin. May function as a natural phytochemical defense against predators. This chain is Seed trypsin/chymotrypsin inhibitor IVB, found in Pisum sativum (Garden pea).